We begin with the raw amino-acid sequence, 316 residues long: MASIISGTAAAEGLLADLTRDVARFSQVHGYAPTLVAVLVGDDPASHIYVRKKIEQCRKVGMESVEHRLPADCSEEDLLALIASLNADERVHGILVQLPLPAQIDSGKVLDTIDPRKDVDGFHPVNVFRLSTGTGGLVPCTPMGCMILLRSVLPDLKGKQAVVIGKSNIVGKPVAMLLLEQGCTVTVCGRHTRNLAEVCRNADIIVAAAGTPHLVKGYWVKAGAVVIDVGINRIALDDGRSRIVGDVASDEIGHAAAFTPVPGGVGPMTIACLAAEYVQAARRRAWCWRRTNRHSFSLEGEGYGALLSGAKLGAVG.

NADP(+) contacts are provided by residues 165–167 and isoleucine 231; that span reads GKS.

It belongs to the tetrahydrofolate dehydrogenase/cyclohydrolase family. Homodimer.

The enzyme catalyses (6R)-5,10-methylene-5,6,7,8-tetrahydrofolate + NADP(+) = (6R)-5,10-methenyltetrahydrofolate + NADPH. It carries out the reaction (6R)-5,10-methenyltetrahydrofolate + H2O = (6R)-10-formyltetrahydrofolate + H(+). The protein operates within one-carbon metabolism; tetrahydrofolate interconversion. In terms of biological role, catalyzes the oxidation of 5,10-methylenetetrahydrofolate to 5,10-methenyltetrahydrofolate and then the hydrolysis of 5,10-methenyltetrahydrofolate to 10-formyltetrahydrofolate. This chain is Bifunctional protein FolD, found in Sphingobium chlorophenolicum.